The sequence spans 209 residues: Regulator of G-protein signaling 1 (209 aa).

The RGS domain maps to 85–200; it reads SLEKLLANQT…LKSDIYLNLL (116 aa).

As to quaternary structure, interacts with GNAI1 and GNAQ. As to expression, detected in peripheral blood monocytes. Expression is relatively low in B-cells and chronic lymphocytic leukemia B-cells; however, in other types of malignant B-cell such as non-Hodgkin lymphoma and hairy cell leukemia, expression is constitutively high.

The protein localises to the cell membrane. The protein resides in the cytoplasm. It localises to the cytosol. Regulates G protein-coupled receptor signaling cascades, including signaling downstream of the N-formylpeptide chemoattractant receptors and leukotriene receptors. Inhibits B cell chemotaxis toward CXCL12. Inhibits signal transduction by increasing the GTPase activity of G protein alpha subunits thereby driving them into their inactive GDP-bound form. This Homo sapiens (Human) protein is Regulator of G-protein signaling 1 (RGS1).